We begin with the raw amino-acid sequence, 306 residues long: Aquaporin-1 (306 aa).

A compositionally biased stretch (polar residues) spans Met1–Leu23. Residues Met1–Asn24 are disordered. The Cytoplasmic segment spans residues Met1 to Arg59. The helical transmembrane segment at Glu60 to Ala80 threads the bilayer. Topologically, residues Glu81–Trp92 are extracellular. A helical transmembrane segment spans residues Leu93–Val113. Residues Ser114–Leu145 are Cytoplasmic-facing. The NPA 1 signature appears at Asn119–Ala121. The chain crosses the membrane as a helical span at residues Leu146–Phe166. Over Asp167–Gly192 the chain is Extracellular. The helical transmembrane segment at Ile193 to Val213 threads the bilayer. Residues Thr214–Gln226 are Cytoplasmic-facing. Residues Gly227 to Phe247 form a helical membrane-spanning segment. The Extracellular segment spans residues Ser248–Ala278. The NPA 2 motif lies at Asn250–Ala252. A helical transmembrane segment spans residues Leu279–Phe299. Residues Ser300–Ala306 lie on the Cytoplasmic side of the membrane.

This sequence belongs to the MIP/aquaporin (TC 1.A.8) family.

Its subcellular location is the cell membrane. The enzyme catalyses H2O(in) = H2O(out). Its function is as follows. Water channel required to facilitate the transport of water across membranes. Contributes to water uptake of spores during the early stages of spore germination. Aquaporins AQP1 and AQP2 act as extracellular pH sensors and enable the spores to hydrate under favorable conditions and to commence germination. Wounded vegetables and fruit present acidic pH, so the optimal pH range for germination is adapted to the relevant host pH. The protein is Aquaporin-1 of Rhizopus delemar (strain RA 99-880 / ATCC MYA-4621 / FGSC 9543 / NRRL 43880) (Mucormycosis agent).